Consider the following 161-residue polypeptide: Allophycocyanin subunit alpha-B (161 aa).

N4-methylasparagine is present on N71. Residue C81 participates in (2R,3E)-phycocyanobilin binding.

It belongs to the phycobiliprotein family. As to quaternary structure, heterohexamer of two alpha chains, one alpha-B chain and three beta chains. Post-translationally, contains one covalently linked phycocyanobilin chromophore. The chromophore is added by phycocyanobilin lyase CpcS 1.

Its subcellular location is the cellular thylakoid membrane. In terms of biological role, light-harvesting photosynthetic bile pigment-protein from the phycobiliprotein complex. Allophycocyanin has a maximum absorption at approximately 654 nanometers. The sequence is that of Allophycocyanin subunit alpha-B (apcD) from Nostoc sp. (strain PCC 7120 / SAG 25.82 / UTEX 2576).